We begin with the raw amino-acid sequence, 174 residues long: NADH-quinone oxidoreductase subunit B 2 (174 aa).

4 residues coordinate [4Fe-4S] cluster: cysteine 38, cysteine 39, cysteine 104, and cysteine 133.

It belongs to the complex I 20 kDa subunit family. In terms of assembly, NDH-1 is composed of 14 different subunits. Subunits NuoB, C, D, E, F, and G constitute the peripheral sector of the complex. It depends on [4Fe-4S] cluster as a cofactor.

Its subcellular location is the cell membrane. It catalyses the reaction a quinone + NADH + 5 H(+)(in) = a quinol + NAD(+) + 4 H(+)(out). Functionally, NDH-1 shuttles electrons from NADH, via FMN and iron-sulfur (Fe-S) centers, to quinones in the respiratory chain. The immediate electron acceptor for the enzyme in this species is believed to be ubiquinone. Couples the redox reaction to proton translocation (for every two electrons transferred, four hydrogen ions are translocated across the cytoplasmic membrane), and thus conserves the redox energy in a proton gradient. This Chloroflexus aurantiacus (strain ATCC 29366 / DSM 635 / J-10-fl) protein is NADH-quinone oxidoreductase subunit B 2.